The primary structure comprises 490 residues: AP-5 complex subunit mu-1 (490 aa).

The MHD domain maps to 206–476 (KPQVSISITE…LISSDYYIWN (271 aa)).

Belongs to the adaptor complexes medium subunit family. As to quaternary structure, probably part of the adaptor protein complex 5 (AP-5) a tetramer composed of AP5B1, AP5M1, AP5S1 and AP5Z1.

The protein resides in the cytoplasm. Its subcellular location is the cytosol. It localises to the late endosome membrane. The protein localises to the lysosome membrane. As part of AP-5, a probable fifth adaptor protein complex it may be involved in endosomal transport. This Bos taurus (Bovine) protein is AP-5 complex subunit mu-1 (AP5M1).